A 492-amino-acid chain; its full sequence is Nuclear hormone receptor family member nhr-4 (492 aa).

A DNA-binding region (nuclear receptor) is located at residues 47-122; sequence RLICDVCGDV…VGMNPDSVQN (76 aa). 2 consecutive NR C4-type zinc fingers follow at residues 50-70 and 86-110; these read CDVC…CNGC and CRFG…LKKC. Positions 121 to 143 are disordered; sequence QNERDRNAKNGGMGGPMSSPTQS. In terms of domain architecture, NR LBD spans 215-481; sequence MDFSIHSAVL…ELIQATHKTT (267 aa).

Belongs to the nuclear hormone receptor family.

The protein resides in the nucleus. Functionally, orphan nuclear receptor. In Caenorhabditis elegans, this protein is Nuclear hormone receptor family member nhr-4 (nhr-4).